The chain runs to 212 residues: Thiamine-phosphate synthase (212 aa).

4-amino-2-methyl-5-(diphosphooxymethyl)pyrimidine-binding positions include 33–37 (QMRFK) and N65. D66 and D85 together coordinate Mg(2+). Residue T104 participates in 4-amino-2-methyl-5-(diphosphooxymethyl)pyrimidine binding. Residue 130–132 (TNT) participates in 2-[(2R,5Z)-2-carboxy-4-methylthiazol-5(2H)-ylidene]ethyl phosphate binding. K133 provides a ligand contact to 4-amino-2-methyl-5-(diphosphooxymethyl)pyrimidine. Position 166 (G166) interacts with 2-[(2R,5Z)-2-carboxy-4-methylthiazol-5(2H)-ylidene]ethyl phosphate.

It belongs to the thiamine-phosphate synthase family. Mg(2+) is required as a cofactor.

The enzyme catalyses 2-[(2R,5Z)-2-carboxy-4-methylthiazol-5(2H)-ylidene]ethyl phosphate + 4-amino-2-methyl-5-(diphosphooxymethyl)pyrimidine + 2 H(+) = thiamine phosphate + CO2 + diphosphate. The catalysed reaction is 2-(2-carboxy-4-methylthiazol-5-yl)ethyl phosphate + 4-amino-2-methyl-5-(diphosphooxymethyl)pyrimidine + 2 H(+) = thiamine phosphate + CO2 + diphosphate. It catalyses the reaction 4-methyl-5-(2-phosphooxyethyl)-thiazole + 4-amino-2-methyl-5-(diphosphooxymethyl)pyrimidine + H(+) = thiamine phosphate + diphosphate. It functions in the pathway cofactor biosynthesis; thiamine diphosphate biosynthesis; thiamine phosphate from 4-amino-2-methyl-5-diphosphomethylpyrimidine and 4-methyl-5-(2-phosphoethyl)-thiazole: step 1/1. Functionally, condenses 4-methyl-5-(beta-hydroxyethyl)thiazole monophosphate (THZ-P) and 2-methyl-4-amino-5-hydroxymethyl pyrimidine pyrophosphate (HMP-PP) to form thiamine monophosphate (TMP). This chain is Thiamine-phosphate synthase, found in Flavobacterium johnsoniae (strain ATCC 17061 / DSM 2064 / JCM 8514 / BCRC 14874 / CCUG 350202 / NBRC 14942 / NCIMB 11054 / UW101) (Cytophaga johnsonae).